We begin with the raw amino-acid sequence, 168 residues long: uncharacterized protein (168 aa).

2 4Fe-4S ferredoxin-type domains span residues 48 to 78 (KIPK…MIPI) and 91 to 122 (KIPK…ISPI). Positions 58, 61, 64, 68, 100, 103, 106, and 110 each coordinate [4Fe-4S] cluster.

This is an uncharacterized protein from Methanocaldococcus jannaschii (strain ATCC 43067 / DSM 2661 / JAL-1 / JCM 10045 / NBRC 100440) (Methanococcus jannaschii).